A 464-amino-acid polypeptide reads, in one-letter code: MGKCCRMLIFAAIAGIAVLYYQITKELPKPNIPLDTWWGPGKPQNVDISIRPFKININNKVIENLKLKLNDVQYTLPLEGINFEYGFNTDSLKKIVDFWRTQYNWREREALLNKYPHFKTNIQGLDIHYVHIKPQVSKNIEVLPLVMIHGWPGSFVEFYKIIPMLTTPRAGYNFVFELILPSIPGYGFSQAAAKPGLGSTQVAVIMRNLMERIGFKKYYVQGGDWGSMIISAMSTLFPENVLGQHSNMCFVNTPSSNIKAIIGSFFPESFAGTGNAHKMYPMSEHFFTLLEEMGYLHLQATKPDTVGVALRDSPAGLAAYILEKFSTWTNRSWRSVKDGNLLLKYNIPELLDNVMIYYVTDSITTSMRLYAESFTKAHLALNLDRVRNHVPAACAKFPNELAYVTDCQLAEKYKTLLQSNDMPSGGHFAAFEEPGLLAEDIFTAVKKFKEFYSKKAESQKKADL.

A helical transmembrane segment spans residues 7–27 (MLIFAAIAGIAVLYYQITKEL). The Nucleophile role is filled by aspartate 224. Catalysis depends on tyrosine 370, which acts as the Proton donor. Histidine 427 acts as the Proton acceptor in catalysis.

Belongs to the peptidase S33 family. In terms of tissue distribution, developing oocytes, fat body and midgut epithelium of adults.

It localises to the microsome membrane. The protein localises to the endoplasmic reticulum membrane. It carries out the reaction cis-stilbene oxide + H2O = (1R,2R)-hydrobenzoin. The enzyme catalyses 1-(4-methoxyphenyl)-N-methyl-N-[(3-methyloxetan-3-yl)methyl]methanamine + H2O = 2-{[(4-methoxybenzyl)(methyl)amino]methyl}-2-methylpropane-1,3-diol. Catalyzes juvenile hormone hydrolysis. This Ctenocephalides felis (Cat flea) protein is Juvenile hormone epoxide hydrolase 1.